Here is a 1704-residue protein sequence, read N- to C-terminus: Phospholipid-transporting ATPase ABCA3 (1704 aa).

Asparagine 14 is a glycosylation site (N-linked (GlcNAc...) asparagine). Residues 22–42 traverse the membrane as a helical segment; that stretch reads VLVTVLELFLPLLFSGILIWL. N-linked (GlcNAc...) asparagine glycosylation is found at asparagine 53, asparagine 124, asparagine 140, and asparagine 228. The next 5 helical transmembrane spans lie at 251 to 271, 307 to 327, 344 to 364, 373 to 393, and 405 to 425; these read ISDPFLIAIQYQLPLLLMLSF, AWFLMFLLFSLIVVSFMTLLF, SLVLAFLLCFAISSISFSFMV, MAATVGGFLYFFTYTPYFFVA, and LLSCLLSNVAMAMGAQLIGKF. One can recognise an ABC transporter 1 domain in the interval 530 to 763; the sequence is IKIKHLSKVF…YGAGYHMTLV (234 aa). 566–573 is an ATP binding site; sequence GHNGAGKT. N-linked (GlcNAc...) asparagine glycosylation is found at asparagine 620 and asparagine 945. The next 6 membrane-spanning stretches (helical) occupy residues 1100-1120, 1144-1164, 1183-1203, 1213-1233, 1245-1265, and 1310-1330; these read IALNLLIAMAFLASTFSILAV, SALLWDLISFLVPSLLLLVVF, LLLMLYGWAIIPLMYLLSFFF, LTIFNILSGIATFIVVTIMRI, LDHVFLVLPNHCLGMAVSNFY, and MAASGGIYLTLLFLIETNLLW. N-linked (GlcNAc...) asparagine glycosylation occurs at asparagine 1350. In terms of domain architecture, ABC transporter 2 spans 1381–1614; it reads LIINELSKVY…FGSGYSLQAK (234 aa). 1416 to 1423 provides a ligand contact to ATP; that stretch reads GFNGAGKT.

Homooligomer; disulfide-linked. In terms of processing, N-glycosylated. Localization at intracellular vesicles is accompanied by processing of oligosaccharide from high mannose type to complex type. N-linked glycosylation at Asn-124 and Asn-140 is required for stability and efficient anterograde trafficking and prevents from proteasomal degradation. Proteolytically cleaved by CTSL and to a lower extent by CTSB within multivesicular bodies (MVB) and lamellar bodies (LB) leading to a mature form of 150 kDa. As to expression, highly expressed in lung, moderately expressed in stomach, intestine, and kidney and weakly expressed in thyroid, brain, liver, spleen, heart, testis, and thymus.

The protein localises to the endosome. Its subcellular location is the multivesicular body membrane. The protein resides in the cytoplasmic vesicle membrane. It localises to the late endosome membrane. It is found in the lysosome membrane. The enzyme catalyses ATP + H2O + xenobioticSide 1 = ADP + phosphate + xenobioticSide 2.. It carries out the reaction a 1,2-diacyl-sn-glycero-3-phosphocholine(in) + ATP + H2O = a 1,2-diacyl-sn-glycero-3-phosphocholine(out) + ADP + phosphate + H(+). The catalysed reaction is ATP + H2O + phospholipidSide 1 = ADP + phosphate + phospholipidSide 2.. It catalyses the reaction 1,2-dihexadecanoyl-sn-glycero-3-phosphocholine(in) + ATP + H2O = 1,2-dihexadecanoyl-sn-glycero-3-phosphocholine(out) + ADP + phosphate + H(+). The enzyme catalyses cholesterol(in) + ATP + H2O = cholesterol(out) + ADP + phosphate + H(+). It carries out the reaction a 1,2-diacyl-sn-glycero-3-phospho-(1'-sn-glycerol)(in) + ATP + H2O = a 1,2-diacyl-sn-glycero-3-phospho-(1'-sn-glycerol)(out) + ADP + phosphate + H(+). Catalyzes the ATP-dependent transport of phospholipids such as phosphatidylcholine and phosphoglycerol from the cytoplasm into the lumen side of lamellar bodies, in turn participates in the lamellar bodies biogenesis and homeostasis of pulmonary surfactant. Transports preferentially phosphatidylcholine containing short acyl chains. In addition plays a role as an efflux transporter of miltefosine across macrophage membranes and free cholesterol (FC) through intralumenal vesicles by removing FC from the cell as a component of surfactant and protects cells from free cholesterol toxicity. In Rattus norvegicus (Rat), this protein is Phospholipid-transporting ATPase ABCA3.